An 852-amino-acid polypeptide reads, in one-letter code: DNA mismatch repair protein MutS (852 aa).

602–609 (GPNMSGKS) serves as a coordination point for ATP.

It belongs to the DNA mismatch repair MutS family.

In terms of biological role, this protein is involved in the repair of mismatches in DNA. It is possible that it carries out the mismatch recognition step. This protein has a weak ATPase activity. In Streptococcus thermophilus (strain ATCC BAA-250 / LMG 18311), this protein is DNA mismatch repair protein MutS.